Consider the following 367-residue polypeptide: Germination protease (367 aa).

The propeptide occupies 1 to 15 (MKEPLDLSKYSIRTD).

The protein belongs to the peptidase A25 family. As to quaternary structure, homotetramer. Autoproteolytically processed. The inactive tetrameric zymogen termed p46 autoprocesses to a smaller form termed p41, which is active only during spore germination.

It catalyses the reaction Endopeptidase action with P4 Glu or Asp, P1 preferably Glu &gt; Asp, P1' hydrophobic and P2' Ala.. Initiates the rapid degradation of small, acid-soluble proteins during spore germination. The protein is Germination protease of Bacillus cereus (strain ATCC 14579 / DSM 31 / CCUG 7414 / JCM 2152 / NBRC 15305 / NCIMB 9373 / NCTC 2599 / NRRL B-3711).